Consider the following 430-residue polypeptide: Adenylosuccinate synthetase (430 aa).

GTP contacts are provided by residues 13 to 19 (GDEGKGK) and 41 to 43 (GHT). Catalysis depends on aspartate 14, which acts as the Proton acceptor. The Mg(2+) site is built by aspartate 14 and glycine 41. IMP-binding positions include 14–17 (DEGK), 39–42 (NAGH), threonine 130, arginine 144, glutamine 225, threonine 240, and arginine 304. Catalysis depends on histidine 42, which acts as the Proton donor. Residue 300-306 (ASTGRPR) participates in substrate binding. GTP contacts are provided by residues arginine 306, 332–334 (KLD), and 414–416 (STG).

Belongs to the adenylosuccinate synthetase family. As to quaternary structure, homodimer. Mg(2+) serves as cofactor.

It localises to the cytoplasm. The enzyme catalyses IMP + L-aspartate + GTP = N(6)-(1,2-dicarboxyethyl)-AMP + GDP + phosphate + 2 H(+). It functions in the pathway purine metabolism; AMP biosynthesis via de novo pathway; AMP from IMP: step 1/2. In terms of biological role, plays an important role in the de novo pathway of purine nucleotide biosynthesis. Catalyzes the first committed step in the biosynthesis of AMP from IMP. This chain is Adenylosuccinate synthetase, found in Xylella fastidiosa (strain 9a5c).